The sequence spans 207 residues: MTTAAFTPWILGLTGGIGSGKSAAAERFVELGVHLVDADQAARWVVEPGRPALASIVERFGPGVLLDDGQLDRAALRQLIFADPAQRQWLEALLHPLIGQEIFSYLAKAESPYAVYVSPLLIESGQYRKTQRVLVIDAPQALQMERTLQRDNTSPEQVQAILNAQLAREERLRHADDVVVNDRDLAALHEQIDRLHHFYLTLRGGQP.

Residues 10-207 (ILGLTGGIGS…FYLTLRGGQP (198 aa)) enclose the DPCK domain. An ATP-binding site is contributed by 18-23 (GSGKSA).

It belongs to the CoaE family.

The protein localises to the cytoplasm. It carries out the reaction 3'-dephospho-CoA + ATP = ADP + CoA + H(+). It participates in cofactor biosynthesis; coenzyme A biosynthesis; CoA from (R)-pantothenate: step 5/5. In terms of biological role, catalyzes the phosphorylation of the 3'-hydroxyl group of dephosphocoenzyme A to form coenzyme A. The polypeptide is Dephospho-CoA kinase (Pseudomonas putida (Arthrobacter siderocapsulatus)).